A 375-amino-acid polypeptide reads, in one-letter code: Period circadian protein (375 aa).

3 disordered regions span residues 28-118, 140-189, and 220-254; these read TAPV…AVTP, KHRE…WEGE, and CQAS…NQYA. The segment covering 69–91 has biased composition (low complexity); sequence SGNFTTGSNLHMSSVTNTSNAGT. The span at 92–113 shows a compositional bias: gly residues; that stretch reads GTSGTGNSGGGGGGGGGGGPGN. Residues 145 to 156 show a composition bias toward basic and acidic residues; sequence RGRSGEKNKKSA. Over residues 224–243 the composition is skewed to gly residues; the sequence is GAGGGGSGSVGGTGNIGSGG. The span at 245 to 254 shows a compositional bias: polar residues; that stretch reads NAQPSTNQYA.

As to quaternary structure, forms a heterodimer with timeless (TIM); the complex then translocates into the nucleus. In terms of processing, phosphorylated with a circadian rhythmicity, probably by the double-time protein (dbt). Phosphorylation could be implicated in the stability of per monomer and in the formation of heterodimer per-tim.

It localises to the nucleus. The protein resides in the cytoplasm. It is found in the perinuclear region. Its function is as follows. Essential for biological clock functions. Determines the period length of circadian and ultradian rhythms; an increase in PER dosage leads to shortened circadian rhythms and a decrease leads to lengthened circadian rhythms. Essential for the circadian rhythmicity of locomotor activity, eclosion behavior, and for the rhythmic component of the male courtship song that originates in the thoracic nervous system. The biological cycle depends on the rhythmic formation and nuclear localization of the TIM-PER complex. Light induces the degradation of TIM, which promotes elimination of PER. Nuclear activity of the heterodimer coordinatively regulates PER and TIM transcription through a negative feedback loop. Behaves as a negative element in circadian transcriptional loop. Does not appear to bind DNA, suggesting indirect transcriptional inhibition. The sequence is that of Period circadian protein (per) from Drosophila capricorni (Fruit fly).